A 136-amino-acid polypeptide reads, in one-letter code: MARTKQTARKSTGGKAPRKQLATKAARKSAPAAGGVKKPHRYKPGTVALREIRRYQKSTELLIRKLPFQRLVREIAQDFKTDLRFQSSAIGALQEAAEAYLVSLFEDTNLAAIHAKRVTIQPKDIALARRLRGERS.

The disordered stretch occupies residues 1–41 (MARTKQTARKSTGGKAPRKQLATKAARKSAPAAGGVKKPHR). N6,N6,N6-trimethyllysine; alternate is present on Lys-5. Lys-5 carries the post-translational modification N6,N6-dimethyllysine; alternate. Lys-5 and Lys-10 each carry N6-methyllysine; alternate. Lys-10 carries the N6-acetyllysine; alternate modification. Ser-11 carries the phosphoserine modification. Lys-15 is subject to N6,N6-dimethyllysine; alternate. 5 positions are modified to N6-acetyllysine; alternate: Lys-15, Lys-19, Lys-24, Lys-28, and Lys-37. An N6-methyllysine; alternate mark is found at Lys-19, Lys-24, Lys-28, and Lys-37. The span at 22–33 (ATKAARKSAPAA) shows a compositional bias: low complexity. N6,N6,N6-trimethyllysine; alternate is present on residues Lys-28 and Lys-37. An N6,N6-dimethyllysine; alternate mark is found at Lys-28 and Lys-37. Lys-57 and Lys-65 each carry N6-acetyllysine. Lys-80 bears the N6,N6,N6-trimethyllysine; alternate mark. At Lys-80 the chain carries N6,N6-dimethyllysine; alternate. An N6-methyllysine; alternate modification is found at Lys-80.

Belongs to the histone H3 family. As to quaternary structure, the nucleosome is a histone octamer containing two molecules each of H2A, H2B, H3 and H4 assembled in one H3-H4 heterotetramer and two H2A-H2B heterodimers. The octamer wraps approximately 147 bp of DNA. Post-translationally, phosphorylated to form H3S10ph. H3S10ph promotes subsequent H3K14ac formation and is required for transcriptional activation through TBP recruitment to the promoters. Mono-, di- and trimethylated by the COMPASS complex to form H3K4me1/2/3. H3K4me activates gene expression by regulating transcription elongation and plays a role in telomere length maintenance. H3K4me enrichment correlates with transcription levels, and occurs in a 5' to 3' gradient with H3K4me3 enrichment at the 5'-end of genes, shifting to H3K4me2 and then H3K4me1. Methylated by SET2 to form H3K36me. H3K36me represses gene expression. Methylated by DOT1 to form H3K79me. H3K79me is required for association of SIR proteins with telomeric regions and for telomeric silencing. The COMPASS-mediated formation of H3K4me2/3 and the DOT1-mediated formation of H3K79me require H2BK123ub1. In terms of processing, acetylation of histone H3 leads to transcriptional activation. H3K14ac formation by GCN5 is promoted by H3S10ph. H3K14ac can also be formed by ESA1. H3K56ac formation occurs predominantly in newly synthesized H3 molecules during G1, S and G2/M of the cell cycle and may be involved in DNA repair.

The protein resides in the nucleus. The protein localises to the chromosome. Its function is as follows. Core component of nucleosome. Nucleosomes wrap and compact DNA into chromatin, limiting DNA accessibility to the cellular machineries which require DNA as a template. Histones thereby play a central role in transcription regulation, DNA repair, DNA replication and chromosomal stability. DNA accessibility is regulated via a complex set of post-translational modifications of histones, also called histone code, and nucleosome remodeling. The protein is Histone H3.1 (HHT1) of Mycosarcoma maydis (Corn smut fungus).